The primary structure comprises 29 residues: Cyclotide mela-3 (29 aa).

Residues 1-29 (GKPICGETCFKGKCYTPGCTCSYPICKKD) constitute a cross-link (cyclopeptide (Gly-Asp)). Disulfide bonds link Cys-5/Cys-19, Cys-9/Cys-21, and Cys-14/Cys-26.

In terms of processing, this is a cyclic peptide. Post-translationally, contains 3 disulfide bonds.

Its function is as follows. Probably participates in a plant defense mechanism (Potential). Binds to and induces leakage in phospholipd membranes, particularly ones containing 1-palmitoyl-2-oleophosphatidylethanolamine (POPE). In vitro, displays cytotoxicity against cultured cells. Not active against Gram-negative bacterium E.coli ATCC 25922 or Gram-positive bacterium S.aureus ATCC 25923 up to a concentration of 64 uM. This chain is Cyclotide mela-3, found in Melicytus latifolius (Norfolk Island mahoe).